Reading from the N-terminus, the 266-residue chain is NADP-dependent mannitol dehydrogenase (266 aa).

2 residues coordinate NADP(+): Asn-107 and Lys-140. Ser-159 functions as the Proton donor in the catalytic mechanism. Residues Tyr-174, Lys-178, Ile-206, and Thr-208 each coordinate NADP(+). Tyr-174 acts as the Proton acceptor in catalysis. Lys-178 (lowers pKa of active site Tyr) is an active-site residue.

Belongs to the short-chain dehydrogenases/reductases (SDR) family. In terms of assembly, homotetramer.

The enzyme catalyses D-mannitol + NADP(+) = D-fructose + NADPH + H(+). Catalyzes the interconversion between D-mannitol and D-fructose. Plays a key role in liamocins biosynthesis by providing the mannitol moity that is linked to 3,5-dihydroxydecanoic acid (provided by the HR-PKS PKS1) via ester bond formation catalyzed by the esterase EST1. This is NADP-dependent mannitol dehydrogenase from Aureobasidium melanogenum (Aureobasidium pullulans var. melanogenum).